The primary structure comprises 255 residues: uncharacterized protein (255 aa).

Residues 1–22 (MNILSPIIIIIILIVLFYVMRM) form the signal peptide.

This is an uncharacterized protein from Acanthamoeba polyphaga (Amoeba).